The sequence spans 247 residues: ATP synthase subunit a, chloroplastic (247 aa).

5 consecutive transmembrane segments (helical) span residues 38–58 (QVLI…IIAV), 95–115 (VPFI…GALL), 134–154 (INTT…AGLT), 199–219 (LVVV…VMFL), and 220–240 (GLFT…AYIG).

Belongs to the ATPase A chain family. F-type ATPases have 2 components, CF(1) - the catalytic core - and CF(0) - the membrane proton channel. CF(1) has five subunits: alpha(3), beta(3), gamma(1), delta(1), epsilon(1). CF(0) has four main subunits: a, b, b' and c.

The protein resides in the plastid. It localises to the chloroplast thylakoid membrane. In terms of biological role, key component of the proton channel; it plays a direct role in the translocation of protons across the membrane. This chain is ATP synthase subunit a, chloroplastic, found in Dioscorea elephantipes (Elephant's foot yam).